We begin with the raw amino-acid sequence, 818 residues long: Phenylalanine--tRNA ligase beta subunit (818 aa).

The tRNA-binding domain maps to 39–148 (AAELQKFEVA…EDAVVGENFT (110 aa)). Positions 423-498 (PQKKPLDFSA…RIYGYDKIES (76 aa)) constitute a B5 domain. 4 residues coordinate Mg(2+): D476, D482, E485, and E486. The region spanning 724–817 (SDFQANFRDY…IEQKFQGTLR (94 aa)) is the FDX-ACB domain.

It belongs to the phenylalanyl-tRNA synthetase beta subunit family. Type 1 subfamily. In terms of assembly, tetramer of two alpha and two beta subunits. The cofactor is Mg(2+).

Its subcellular location is the cytoplasm. The catalysed reaction is tRNA(Phe) + L-phenylalanine + ATP = L-phenylalanyl-tRNA(Phe) + AMP + diphosphate + H(+). This Rickettsia felis (strain ATCC VR-1525 / URRWXCal2) (Rickettsia azadi) protein is Phenylalanine--tRNA ligase beta subunit.